Consider the following 247-residue polypeptide: Dof zinc finger protein DOF3.5 (247 aa).

The Dof-type zinc finger occupies 25–79 (PSCPRCGSSNTKFCYYNNYSLTQPRYFCKGCRRYWTKGGSLRNVPVGGGCRKSRR). Zn(2+) is bound by residues cysteine 27, cysteine 30, cysteine 52, and cysteine 55. The disordered stretch occupies residues 70 to 100 (VGGGCRKSRRPKSSSGNNTKTSLTANSGNPG). Polar residues predominate over residues 82 to 94 (SSSGNNTKTSLTA).

The protein localises to the nucleus. Functionally, transcription factor that binds specifically to a 5'-AA[AG]G-3' consensus core sequence. This chain is Dof zinc finger protein DOF3.5 (DOF3.5), found in Arabidopsis thaliana (Mouse-ear cress).